We begin with the raw amino-acid sequence, 193 residues long: MASDELPVAAAATEEEDLVEILDEGSGRLDIARYVDHVRDLAAGAIATFEGTTRDSFEGRRVVELRYEAYGAMARRRLAAILREARAAHSLRRLAVAHRLGTVPAGEASVFVAASAVHRADAMEACRYVIDEVKASVPIWKKEVYDDGEVWKENREFLDRTTTDGTTASSPAPATRPAKGGGCCGRKVRVNES.

Residues 118-119 (HR), Lys134, and 141-143 (KKE) each bind substrate. The tract at residues 159–193 (DRTTTDGTTASSPAPATRPAKGGGCCGRKVRVNES) is disordered. Positions 163-178 (TDGTTASSPAPATRPA) are enriched in low complexity.

Belongs to the MoaE family. MOCS2B subfamily. As to quaternary structure, heterotetramer; composed of 2 small (MOCS2A) and 2 large (MOCS2B) subunits.

Its subcellular location is the cytoplasm. It catalyses the reaction 2 [molybdopterin-synthase sulfur-carrier protein]-C-terminal-Gly-aminoethanethioate + cyclic pyranopterin phosphate + H2O = molybdopterin + 2 [molybdopterin-synthase sulfur-carrier protein]-C-terminal Gly-Gly + 2 H(+). It participates in cofactor biosynthesis; molybdopterin biosynthesis. Functionally, catalytic subunit of the molybdopterin synthase complex, a complex that catalyzes the conversion of precursor Z into molybdopterin. Acts by mediating the incorporation of 2 sulfur atoms from thiocarboxylated MOCS2A into precursor Z to generate a dithiolene group. In Oryza sativa subsp. japonica (Rice), this protein is Molybdopterin synthase catalytic subunit.